Consider the following 178-residue polypeptide: MSGVAIHASSWGAALVRISPYTFSAIGIAISIGVSVLGAAWGIYITGSSLIGAAIEAPRITSKNLISVIFCEAVAIYGVIVAIILQTKLESVPSSKMYDAESLRAGYAIFASGIIVGFANLVCGLCVGIIGSSCALSDAQNSTLFVKILVIEIFGSALGLFGVIVGIIMSAQATWPTK.

Over M1–S24 the chain is Lumenal. The helical transmembrane segment at A25–I45 threads the bilayer. Residues T46–N64 are Cytoplasmic-facing. Residues L65–L85 traverse the membrane as a helical segment. Residues Q86–A108 lie on the Lumenal side of the membrane. A helical membrane pass occupies residues I109 to I129. The Cytoplasmic segment spans residues I130–K147. Residues I148 to I168 form a helical membrane-spanning segment. The Lumenal portion of the chain corresponds to M169 to K178.

It belongs to the V-ATPase proteolipid subunit family. As to quaternary structure, V-ATPase is a heteromultimeric enzyme composed of a peripheral catalytic V1 complex (components A to H) attached to an integral membrane V0 proton pore complex (components: a, c, c'', d and e). The proteolipid components c and c'' are present as a hexameric ring that forms the proton-conducting pore. Interacts with APD2.

It localises to the endoplasmic reticulum membrane. It is found in the golgi apparatus membrane. Functionally, proton-conducting pore forming subunit of the membrane integral V0 complex of vacuolar ATPase. V-ATPase is responsible for acidifying a variety of intracellular compartments in eukaryotic cells. The sequence is that of V-type proton ATPase subunit c''2 (VHA-c''2) from Arabidopsis thaliana (Mouse-ear cress).